We begin with the raw amino-acid sequence, 92 residues long: Plasmid copy control protein CopR (92 aa).

The segment covering 1 to 27 has biased composition (basic and acidic residues); the sequence is MELAFRESLKKMRGTKSKEKFSQELEM. Disordered stretches follow at residues 1-40 and 63-92; these read MELAFRESLKKMRGTKSKEKFSQELEMSRSNYSRIESGKS and IPNEPTEPEPETEQVTLELEMEEEKSNDFV. Positions 9 to 62 constitute an HTH cro/C1-type domain; that stretch reads LKKMRGTKSKEKFSQELEMSRSNYSRIESGKSDPTIKTLEQIVKLTNSTLVVDL. Residues 20–39 constitute a DNA-binding region (H-T-H motif); that stretch reads KFSQELEMSRSNYSRIESGK.

In terms of biological role, involved in copy control of plasmid pIP501. The chain is Plasmid copy control protein CopR (copR) from Streptococcus agalactiae.